We begin with the raw amino-acid sequence, 132 residues long: Small ribosomal subunit protein uS8 (132 aa).

It belongs to the universal ribosomal protein uS8 family. Part of the 30S ribosomal subunit. Contacts proteins S5 and S12.

Functionally, one of the primary rRNA binding proteins, it binds directly to 16S rRNA central domain where it helps coordinate assembly of the platform of the 30S subunit. In Ligilactobacillus salivarius (strain UCC118) (Lactobacillus salivarius), this protein is Small ribosomal subunit protein uS8.